The chain runs to 87 residues: UPF0250 protein KPN78578_06520 (87 aa).

Belongs to the UPF0250 family.

The polypeptide is UPF0250 protein KPN78578_06520 (Klebsiella pneumoniae subsp. pneumoniae (strain ATCC 700721 / MGH 78578)).